We begin with the raw amino-acid sequence, 669 residues long: L-type lectin-domain containing receptor kinase IV.4 (669 aa).

The first 23 residues, 1 to 23 (MFFIKLFTIFFLSFFWQSLKSSS), serve as a signal peptide directing secretion. The Extracellular portion of the chain corresponds to 24–294 (QIIDFTYNGF…TRVYRFYKNW (271 aa)). Residues 26 to 260 (IDFTYNGFRP…SEIFVLGWSF (235 aa)) form a legume-lectin like region. N-linked (GlcNAc...) asparagine glycosylation is found at asparagine 58, asparagine 80, asparagine 127, asparagine 152, and asparagine 185. The chain crosses the membrane as a helical span at residues 295–315 (VPLISLLLIPFLLIIFLVRFI). Over 316–669 (MKRRRKFAEE…VAYSLLSSGR (354 aa)) the chain is Cytoplasmic. In terms of domain architecture, Protein kinase spans 350–627 (FKDKNILGSG…LQYLRGDAML (278 aa)). ATP is bound by residues 356 to 364 (LGSGGFGSV) and lysine 379. Residue aspartate 475 is the Proton acceptor of the active site.

In the C-terminal section; belongs to the protein kinase superfamily. Ser/Thr protein kinase family. It in the N-terminal section; belongs to the leguminous lectin family.

It localises to the cell membrane. It catalyses the reaction L-seryl-[protein] + ATP = O-phospho-L-seryl-[protein] + ADP + H(+). The catalysed reaction is L-threonyl-[protein] + ATP = O-phospho-L-threonyl-[protein] + ADP + H(+). Its function is as follows. Involved in resistance response to the pathogenic oomycetes Phytophthora infestans and Phytophthora capsici and to the pathogenic bacteria Pseudomonas syringae. The polypeptide is L-type lectin-domain containing receptor kinase IV.4 (Arabidopsis thaliana (Mouse-ear cress)).